Reading from the N-terminus, the 122-residue chain is Large ribosomal subunit protein uL14 (122 aa).

Belongs to the universal ribosomal protein uL14 family. As to quaternary structure, part of the 50S ribosomal subunit. Forms a cluster with proteins L3 and L19. In the 70S ribosome, L14 and L19 interact and together make contacts with the 16S rRNA in bridges B5 and B8.

Binds to 23S rRNA. Forms part of two intersubunit bridges in the 70S ribosome. The protein is Large ribosomal subunit protein uL14 of Gemmatimonas aurantiaca (strain DSM 14586 / JCM 11422 / NBRC 100505 / T-27).